The primary structure comprises 72 residues: Translation initiation factor IF-1 (72 aa).

The S1-like domain maps to 1–72 (MAKEDVIEVE…NRGRIVYRYK (72 aa)).

Belongs to the IF-1 family. Component of the 30S ribosomal translation pre-initiation complex which assembles on the 30S ribosome in the order IF-2 and IF-3, IF-1 and N-formylmethionyl-tRNA(fMet); mRNA recruitment can occur at any time during PIC assembly.

The protein localises to the cytoplasm. One of the essential components for the initiation of protein synthesis. Stabilizes the binding of IF-2 and IF-3 on the 30S subunit to which N-formylmethionyl-tRNA(fMet) subsequently binds. Helps modulate mRNA selection, yielding the 30S pre-initiation complex (PIC). Upon addition of the 50S ribosomal subunit IF-1, IF-2 and IF-3 are released leaving the mature 70S translation initiation complex. This chain is Translation initiation factor IF-1, found in Moorella thermoacetica (strain ATCC 39073 / JCM 9320).